The chain runs to 285 residues: MTSPIIVRTVAEMREHVRAWKAAGQRVAVVPTMGALHEGHLSLVRLAQQHAERVIATVFVNPKQFAPHEDFDAYPRGEAADAEKLALVGCDLLFAPNATEMYAPGFSTLVSVSGVSEPLEGAARPQFFGGVATVVAKLFIQSQADVAVFGEKDYQQLQVVRRMARDLDIPVEIIGAPTARAEDGLALSSRNAYLSAEERAAAVALPTAMKAAAAAVAQGGPIEDAERSAVAALQAAGFGQVDYVEIREASDLSRLGPGPIGEASGRILVAAWLGKTRLIDNMAVG.

Met-33–His-40 provides a ligand contact to ATP. His-40 (proton donor) is an active-site residue. (R)-pantoate is bound at residue Gln-64. Position 64 (Gln-64) interacts with beta-alanine. Gly-150–Asp-153 is a binding site for ATP. Gln-156 contributes to the (R)-pantoate binding site. ATP-binding positions include Ala-179 and Leu-187–Arg-190.

This sequence belongs to the pantothenate synthetase family. As to quaternary structure, homodimer.

Its subcellular location is the cytoplasm. The catalysed reaction is (R)-pantoate + beta-alanine + ATP = (R)-pantothenate + AMP + diphosphate + H(+). Its pathway is cofactor biosynthesis; (R)-pantothenate biosynthesis; (R)-pantothenate from (R)-pantoate and beta-alanine: step 1/1. Functionally, catalyzes the condensation of pantoate with beta-alanine in an ATP-dependent reaction via a pantoyl-adenylate intermediate. The polypeptide is Pantothenate synthetase (Caulobacter vibrioides (strain ATCC 19089 / CIP 103742 / CB 15) (Caulobacter crescentus)).